Reading from the N-terminus, the 320-residue chain is Methionyl-tRNA formyltransferase (320 aa).

117 to 120 (SLLP) contacts (6S)-5,6,7,8-tetrahydrofolate.

Belongs to the Fmt family.

It catalyses the reaction L-methionyl-tRNA(fMet) + (6R)-10-formyltetrahydrofolate = N-formyl-L-methionyl-tRNA(fMet) + (6S)-5,6,7,8-tetrahydrofolate + H(+). Attaches a formyl group to the free amino group of methionyl-tRNA(fMet). The formyl group appears to play a dual role in the initiator identity of N-formylmethionyl-tRNA by promoting its recognition by IF2 and preventing the misappropriation of this tRNA by the elongation apparatus. The polypeptide is Methionyl-tRNA formyltransferase (Bordetella petrii (strain ATCC BAA-461 / DSM 12804 / CCUG 43448)).